The following is a 354-amino-acid chain: Cellular communication network factor 6 (354 aa).

Residues 1 to 23 (MQGLLFSTLLLAGLAQFCCRVQG) form the signal peptide. In terms of domain architecture, IGFBP N-terminal spans 44–117 (RKQFCHWPCK…RYETGVCAYL (74 aa)). Intrachain disulfides connect cysteine 48–cysteine 72, cysteine 52–cysteine 74, cysteine 54–cysteine 75, cysteine 61–cysteine 78, cysteine 86–cysteine 100, and cysteine 92–cysteine 114. Residue asparagine 178 is glycosylated (N-linked (GlcNAc...) asparagine). The TSP type-1 domain maps to 208–253 (KCLVQATKWTPCSRTCGMGISNRVTNENSNCEMRKEKRLCYIQPCD). Disulfide bonds link cysteine 268–cysteine 305, cysteine 285–cysteine 319, cysteine 296–cysteine 335, cysteine 299–cysteine 337, and cysteine 304–cysteine 341. The 75-residue stretch at 268 to 342 (CQPTFQLSKA…TSCVCQRNCR (75 aa)) folds into the CTCK domain. Residue asparagine 308 is glycosylated (N-linked (GlcNAc...) asparagine).

This sequence belongs to the CCN family. As to expression, predominant expression in adult kidney and testis and fetal kidney. Weaker expression found in placenta, ovary, prostate and small intestine. Also expressed in skeletally-derived cells such as synoviocytes and articular cartilage chondrocytes.

The protein localises to the secreted. It is found in the mitochondrion. Functionally, plays a role in mitochondrial electron transport and mitochondrial respiration. Through its regulation of the mitochondrial function may play a role in normal postnatal skeletal growth and cartilage homeostasis. In Homo sapiens (Human), this protein is Cellular communication network factor 6.